A 430-amino-acid chain; its full sequence is Ribosomal protein uS12 methylthiotransferase RimO (430 aa).

An MTTase N-terminal domain is found at 1–116 (MKIGIKVLGC…IAEAIEKATP (116 aa)). [4Fe-4S] cluster-binding residues include cysteine 10, cysteine 46, cysteine 79, cysteine 146, cysteine 150, and cysteine 153. A Radical SAM core domain is found at 132 to 362 (SCNNSFAYVK…LIFQSQIAYE (231 aa)). The TRAM domain occupies 365 to 430 (KRFVGKNLNV…DEYDLKGELI (66 aa)).

It belongs to the methylthiotransferase family. RimO subfamily. Requires [4Fe-4S] cluster as cofactor.

It localises to the cytoplasm. The catalysed reaction is L-aspartate(89)-[ribosomal protein uS12]-hydrogen + (sulfur carrier)-SH + AH2 + 2 S-adenosyl-L-methionine = 3-methylsulfanyl-L-aspartate(89)-[ribosomal protein uS12]-hydrogen + (sulfur carrier)-H + 5'-deoxyadenosine + L-methionine + A + S-adenosyl-L-homocysteine + 2 H(+). Functionally, catalyzes the methylthiolation of an aspartic acid residue of ribosomal protein uS12. The protein is Ribosomal protein uS12 methylthiotransferase RimO of Pseudothermotoga lettingae (strain ATCC BAA-301 / DSM 14385 / NBRC 107922 / TMO) (Thermotoga lettingae).